The following is a 796-amino-acid chain: Probable phosphoketolase 2 (796 aa).

The protein belongs to the XFP family. Thiamine diphosphate is required as a cofactor.

In Lactiplantibacillus plantarum (strain ATCC BAA-793 / NCIMB 8826 / WCFS1) (Lactobacillus plantarum), this protein is Probable phosphoketolase 2.